A 229-amino-acid chain; its full sequence is Cytidylate kinase (229 aa).

Residue 10–18 (GHSSSGKST) coordinates ATP.

This sequence belongs to the cytidylate kinase family. Type 1 subfamily.

The protein localises to the cytoplasm. It catalyses the reaction CMP + ATP = CDP + ADP. It carries out the reaction dCMP + ATP = dCDP + ADP. This is Cytidylate kinase from Parabacteroides distasonis (strain ATCC 8503 / DSM 20701 / CIP 104284 / JCM 5825 / NCTC 11152).